A 45-amino-acid chain; its full sequence is Enterotoxin (45 aa).

In terms of assembly, one of 3 components (of 35, 45 and 105 kDa) of the enterotoxin.

In terms of biological role, one of 3 components required for cytotoxicity (tested in African green monkey Vero cells); the complex is not hemolytic. This Bacillus cereus protein is Enterotoxin.